We begin with the raw amino-acid sequence, 450 residues long: Enolase (450 aa).

Gln-173 contributes to the (2R)-2-phosphoglycerate binding site. The active-site Proton donor is the Glu-215. The Mg(2+) site is built by Asp-254, Glu-308, and Asp-335. (2R)-2-phosphoglycerate-binding residues include Lys-360, Arg-389, Ser-390, and Lys-411. Lys-360 (proton acceptor) is an active-site residue.

Belongs to the enolase family. It depends on Mg(2+) as a cofactor.

It is found in the cytoplasm. The protein resides in the secreted. The protein localises to the cell surface. The enzyme catalyses (2R)-2-phosphoglycerate = phosphoenolpyruvate + H2O. Its pathway is carbohydrate degradation; glycolysis; pyruvate from D-glyceraldehyde 3-phosphate: step 4/5. Catalyzes the reversible conversion of 2-phosphoglycerate (2-PG) into phosphoenolpyruvate (PEP). It is essential for the degradation of carbohydrates via glycolysis. The chain is Enolase from Malacoplasma penetrans (strain HF-2) (Mycoplasma penetrans).